The following is a 447-amino-acid chain: F-box only protein 5 (447 aa).

Ser94 and Ser102 each carry phosphoserine. The interaction with EVI5 stretch occupies residues 135–244; the sequence is ALETSRLYED…IGRKMGLECV (110 aa). The F-box domain occupies 250–296; sequence LFRRGLRHVLATILAQLSDMDLINVSKVSTTWKKILEDDKGAFQLYS. The segment at 261–339 is sufficient for interaction with RPS6KA2; Prevents association of CDC20 with RPS6KA2; sequence TILAQLSDMD…KSAAQTSLKK (79 aa). The tract at residues 261–409 is requires for efficient binding to CDC20; sequence TILAQLSDMD…GCGFDYCTKC (149 aa). The interval 305 to 447 is inhibits APC ubiquitin ligase activity; sequence NNNKFSPHAS…KKSKKNLRRL (143 aa). A competitively blocks access of APC substrates to the D-box coreceptor formed by FZR1 and ANAPC10 region spans residues 322–325; it reads RTPL. The interval 337–358 is disordered; sequence LKKDAQTKLSNQGDQKGSTYSR. Residues 343–357 show a composition bias toward polar residues; the sequence is TKLSNQGDQKGSTYS. The ZBR-type zinc finger occupies 374 to 422; the sequence is SLKACIRCNSPAKYDCYLQRATCKREGCGFDYCTKCLCNYHTTKDCSDG. Positions 378, 381, 396, 401, 406, 409, 414, and 419 each coordinate Zn(2+). The allows a rapid multiple mono-ubiquitination of the APC substrate, but strongly inhibits the slow ubiquitin chain elongation catalyzed by UBCH10 stretch occupies residues 378–420; that stretch reads CIRCNSPAKYDCYLQRATCKREGCGFDYCTKCLCNYHTTKDCS. The segment at 437 to 447 is sufficient to suppress UBE2S activity; essential for interaction with UBE2S; competitively inhibits the rapide ubiquitin chain elongation by UBE2D1 which blocks UBE2D1 with APC; indispensable for recruitment and position of FBXO5 to the catalytic site of APC; abrogates the inhibition of ubiquitin chain assembly primarily catalyzed by UBE2S; inhibits the ubiquitination by either UBE2C or UBE2D1; sequence TKKSKKNLRRL.

Part of a SCF (SKP1-cullin-F-box) protein ligase complex. Interacts with BTRC; mediates proteolysis by the SCF ubiquitin ligase complex leading to activation of APC in late mitosis and subsequent mitotic progression. Interacts with FZR1/CDH1 and the N-terminal substrate-binding domain of CDC20; prevents APC activation. Also interacts with EVI5 which blocks its phosphorylation by PLK1 and prevents its subsequent binding to BTRC and degradation. Interacts simultaneously with anaphase promoting complex (APC), through at least ANAPC2, CDC23, CDC27, the APC substrate GMNN and the APC activator FZR1. Interacts with UBE2S; interferes with the activity of UBE2S mainly by disrupting the dynamic electrostatic association between the C-terminal tail of UBE2S and ANAPC2. Interacts with RPS6KA2; cooperates to induce the metaphase arrest of early blastomeres; increases and stabilizes interaction of FBXO5 with CDC20. Phosphorylation by CDK2 and subsequently by PLK1 triggers degradation during early mitosis through ubiquitin-mediated proteolysis by the SCF ubiquitin ligase complex containing the F-box protein BTRC. This degradation is necessary for the activation of APC in late mitosis and subsequent mitotic progression. Phosphorylated by RPS6KA2; increases and stabilizes interaction with CDC20. Post-translationally, ubiquitinated by the SCF(BTRC) complex following phosphorylation by PLK1. Undergoes both 'Lys-11' and 'Lys-48'-linked polyubiquitination by APC-FZR1 complex leading to degradation by proteasome during G1 phase. Degraded through the SCF(BTRC) complex; degradation occurs during oocyte maturation, between germinal vesicle breakdown (GVBD) and meiosis I, and is required for the meiosis I-meiosis II transition.

Its subcellular location is the nucleus. The protein localises to the cytoplasm. It is found in the cytoskeleton. It localises to the spindle. It functions in the pathway protein modification; protein ubiquitination. Functionally, regulator of APC activity during mitotic and meiotic cell cycle. During mitotic cell cycle plays a role as both substrate and inhibitor of APC-FZR1 complex. During G1 phase, plays a role as substrate of APC-FZR1 complex E3 ligase. Then switches as an inhibitor of APC-FZR1 complex during S and G2 leading to cell-cycle commitment. As APC inhibitor, prevents the degradation of APC substrates at multiple levels: by interacting with APC and blocking access of APC substrates to the D-box coreceptor, formed by FZR1 and ANAPC10; by suppressing ubiquitin ligation and chain elongation by APC by preventing the UBE2C and UBE2S activities. Plays a role in genome integrity preservation by coordinating DNA replication with mitosis through APC inhibition in interphase to stabilize CCNA2 and GMNN in order to promote mitosis and prevent rereplication and DNA damage-induced cellular senescence. During oocyte maturation, plays a role in meiosis through inactivation of APC-FZR1 complex. Inhibits APC through RPS6KA2 interaction that increases FBXO5 affiniy for CDC20 leading to the metaphase arrest of the second meiotic division before fertilization. Controls entry into the first meiotic division through inactivation of APC-FZR1 complex. Promotes migration and osteogenic differentiation of mesenchymal stem cells. In Homo sapiens (Human), this protein is F-box only protein 5.